Consider the following 168-residue polypeptide: Ribulose bisphosphate carboxylase small subunit, chloroplastic (168 aa).

A chloroplast-targeting transit peptide spans 1–28 (MASIAAKSVSLRAATRRAAPVAAPADAR).

This sequence belongs to the RuBisCO small chain family. In terms of assembly, heterohexadecamer of 8 large and 8 small subunits.

The protein resides in the plastid. The protein localises to the chloroplast. Its function is as follows. RuBisCO catalyzes two reactions: the carboxylation of D-ribulose 1,5-bisphosphate, the primary event in carbon dioxide fixation, as well as the oxidative fragmentation of the pentose substrate. Both reactions occur simultaneously and in competition at the same active site. Although the small subunit is not catalytic it is essential for maximal activity. In Chlamydomonas moewusii (Chlamydomonas eugametos), this protein is Ribulose bisphosphate carboxylase small subunit, chloroplastic.